A 463-amino-acid polypeptide reads, in one-letter code: uncharacterized protein (463 aa).

Transmembrane regions (helical) follow at residues 6 to 26 (ILPV…FMLL), 31 to 51 (TFIS…SLSA), 60 to 80 (FIYA…IVSM), 101 to 123 (VRGP…LFFW), 130 to 152 (LIGA…AAMA), 189 to 209 (ASIP…FIMI), 242 to 262 (SILA…MLLF), 269 to 289 (ATAL…FFVY), 304 to 324 (GFKF…FFYL), 413 to 433 (AIWV…AAIC), and 443 to 463 (KNFI…VMML).

Its subcellular location is the cell membrane. This is an uncharacterized protein from Bacillus subtilis (strain 168).